Here is a 151-residue protein sequence, read N- to C-terminus: MKFFTVLLFVSLAATSLALLPGSKDELQMKTQPTDAIPAAQSTPTSYTSEESTSSKDLSKEPSIFREELISKDNVVIESTKPENQEAQDGLRSGSSQLEETTRPTTSAATTSEENLTKSSQTVEEELGKIIEGFVTGAEDIISGASRITKS.

The signal sequence occupies residues 1–19 (MKFFTVLLFVSLAATSLAL). Residues 29–123 (MKTQPTDAIP…ENLTKSSQTV (95 aa)) form a disordered region. Residues 42 to 52 (STPTSYTSEES) are compositionally biased toward low complexity. Residues 53–71 (TSSKDLSKEPSIFREELIS) are compositionally biased toward basic and acidic residues. S54, S59, S63, and S71 each carry phosphoserine. Residues 103 to 114 (RPTTSAATTSEE) are compositionally biased toward low complexity. Residue N115 is glycosylated (N-linked (GlcNAc...) asparagine).

It belongs to the PP3/GlyCAM-1 family. In terms of processing, extensively O-glycosylated. Lymph nodes. Associated with the lumenal surface of the high endothelial venules of peripheral lymph nodes.

Its subcellular location is the cell membrane. Adhesion molecule that accomplishes cell binding by presenting carbohydrate(s) to the lectin domain of L-selectin. This chain is Glycosylation-dependent cell adhesion molecule 1 (Glycam1), found in Mus musculus (Mouse).